Consider the following 194-residue polypeptide: Cytochrome b-245 light chain (194 aa).

Residues 2 to 7 (GQIEWA) lie on the Cytoplasmic side of the membrane. Residues 8-30 (MWANEQALASGLILVAGGIVATA) form a helical membrane-spanning segment. Residues 31 to 35 (GRFTQ) lie on the Extracellular side of the membrane. The chain crosses the membrane as a helical span at residues 36–53 (WYFGTYAIAAGVLVCLLE). Over 54–69 (YPRGSRAKGSTLERCG) the chain is Cytoplasmic. An intramembrane segment occupies 70–80 (QRYLTAVLKLL). Over 81–86 (GPLSRN) the chain is Cytoplasmic. A helical membrane pass occupies residues 87–104 (YYFRAALHLALSVPAGFL). L105 is a topological domain (extracellular). The helical transmembrane segment at 106-126 (ATILGTVCLVIASIIYLLAAV) threads the bilayer. At 127 to 194 (RGEQWTPIEP…NPIPVTDEVV (68 aa)) the chain is on the cytoplasmic side. Positions 134–194 (IEPRPKERPQ…NPIPVTDEVV (61 aa)) are disordered. At T147 the chain carries Phosphothreonine. A Glycyl lysine isopeptide (Lys-Gly) (interchain with G-Cter in ubiquitin) cross-link involves residue K149.

It belongs to the p22phox family. As to quaternary structure, component of the phagocyte NADPH oxidase core complex/cytochrome b558 complex, composed of CYBB (heavy chain (beta)) and CYBA (light chain (alpha)). Component of the phagocyte NADPH oxidase complex composed of an obligatory core heterodimer formed by the membrane proteins CYBA and CYBB and the cytosolic regulatory subunits NCF1/p47-phox, NCF2/p67-phox, NCF4/p40-phox and the small GTPase RAC1 or RAC2. Interacts with NCF1 (via SH3 domain). Interacts with SH3PXD2A. Interacts with DUOX1, DUOX2 and TPO. Interacts with NOX4; this interaction mediates superoxide generation. Interacts with calprotectin (S100A8/9). Interacts with GBP7. Interacts with NOXO1. Forms a heterodimer with NOX3 and is essential for activity and cell membrane localization of NOX3. Interacts with NOX1. In terms of processing, phosphorylation at Thr-147 enhances NADPH oxidase activity by promoting NCF1/p47-phox binding. Ubiquitinated at Lys-149 likely by RNF145.

The protein localises to the cell membrane. Its function is as follows. Subunit of NADPH oxidase complexes that is required for the NADPH oxidase activity that generates, in various cell types, superoxide from molecular oxygen utilizing NADPH as an electron donor. Subunit of the phagocyte NADPH oxidase complex that mediates the transfer of electrons from cytosolic NADPH to O2 to produce the superoxide anion (O2(-)). In the activated complex, electrons are first transferred from NADPH to flavin adenine dinucleotide (FAD) and subsequently transferred via two heme molecules to molecular oxygen, producing superoxide through an outer-sphere reaction. Activation of the NADPH oxidase complex is initiated by the assembly of cytosolic subunits of the NADPH oxidase complex with the core NADPH oxidase complex to form a complex at the plasma membrane or phagosomal membrane. This activation process is initiated by phosphorylation dependent binding of the cytosolic NCF1/p47-phox subunit to the C-terminus of CYBA/p22-phox. Aassociates with NOX3 to form a functional NADPH oxidase constitutively generating superoxide. This Oryctolagus cuniculus (Rabbit) protein is Cytochrome b-245 light chain.